A 62-amino-acid chain; its full sequence is MDMKKLIERINFLYKKSKEEGLTKEEKVEQQKLRREYIDIIKGNVKVQLEGVEKIPKPNRKN.

Belongs to the UPF0291 family.

It is found in the cytoplasm. The protein is UPF0291 protein CLM_2971 of Clostridium botulinum (strain Kyoto / Type A2).